The following is a 226-amino-acid chain: Transcriptional regulatory protein CitT (226 aa).

The region spanning 3–119 (HIAIAEDDFR…KFRQVLLQYK (117 aa)) is the Response regulatory domain. D54 carries the 4-aspartylphosphate modification. The segment at residues 178-197 (AEELGEKMGASRTTARRYAE) is a DNA-binding region (H-T-H motif).

In terms of processing, phosphorylated by CitS.

The protein resides in the cytoplasm. In terms of biological role, member of the two-component regulatory system CitT/CitS. Regulates the expression of the citM-yflN operon. Phosphorylated CitT binds to the citM promoter to activate the transcription of the citM-yflN operon. This is Transcriptional regulatory protein CitT (citT) from Bacillus subtilis (strain 168).